A 121-amino-acid chain; its full sequence is Large ribosomal subunit protein uL22 (121 aa).

Belongs to the universal ribosomal protein uL22 family. In terms of assembly, part of the 50S ribosomal subunit.

Its function is as follows. This protein binds specifically to 23S rRNA; its binding is stimulated by other ribosomal proteins, e.g. L4, L17, and L20. It is important during the early stages of 50S assembly. It makes multiple contacts with different domains of the 23S rRNA in the assembled 50S subunit and ribosome. Functionally, the globular domain of the protein is located near the polypeptide exit tunnel on the outside of the subunit, while an extended beta-hairpin is found that lines the wall of the exit tunnel in the center of the 70S ribosome. The chain is Large ribosomal subunit protein uL22 from Kocuria rhizophila (strain ATCC 9341 / DSM 348 / NBRC 103217 / DC2201).